The following is a 299-amino-acid chain: MDKTWAEVTCEIPAAMIDLLADFLVELSGNGVSIDNLELDTFSLDTMDEAPVKTVRAYFTPDDELEEKLAALNRFIQEHAPAYGDAAPAPPTVTTLREEDWATGWRQHFAPTRIGRKLVIKPTWEPFSPEPGDLVIELDPGMAFGTGTHPTTRLCLEALEKLGTAGDVLDVGTGSGILAMAAVKLGAQRVVGTDIDPDAVAVARENCAMNGVTAELVTTPLADIPGQFSVVLANILAEDLVRMAADLTAKVAPGGFLILSGILVERESYVIDGFVSTGLTLAETTREGEWSCLLYQAGQ.

S-adenosyl-L-methionine contacts are provided by threonine 152, glycine 172, aspartate 194, and asparagine 234.

Belongs to the methyltransferase superfamily. PrmA family.

It localises to the cytoplasm. It catalyses the reaction L-lysyl-[protein] + 3 S-adenosyl-L-methionine = N(6),N(6),N(6)-trimethyl-L-lysyl-[protein] + 3 S-adenosyl-L-homocysteine + 3 H(+). In terms of biological role, methylates ribosomal protein L11. The protein is Ribosomal protein L11 methyltransferase of Geobacter metallireducens (strain ATCC 53774 / DSM 7210 / GS-15).